A 235-amino-acid chain; its full sequence is MGRAFEYRRAAKEARWDKMSKVFPKLAKAITVAAKDGGCDPDMNPKLRAAIAAAKAENMPKDNIDAAIKRANGKDSADIKTIFYDGKAAHGVQIIVECATDNPTRTVANVKAIFSKNGGEILPSGSLSFMFTRKSVFELEKPSANIEEIELELIDYGLSDIEEDENALFVYGDYANFGTLHEGIEKLNLVVKKASLQYLPNQTVSLDEEQMLEVERLLDKLEDDDDVQAVYTNIE.

It belongs to the TACO1 family.

It localises to the cytoplasm. This Campylobacter concisus (strain 13826) protein is Probable transcriptional regulatory protein Ccon26_04940.